The sequence spans 123 residues: Cliotide T12 (123 aa).

Positions 1-28 (MASLRIAPLALFFFLAASVMFTVEKTEA) are cleaved as a signal peptide. A cross-link (cyclopeptide (Gly-Asp)) is located at residues 29-58 (GIPCGESCVFIPCITGAIGCSCKSKVCYRD). Cystine bridges form between cysteine 32–cysteine 48, cysteine 36–cysteine 50, and cysteine 41–cysteine 55. Residues 59-123 (HVIAAEAKTM…KDHLKMSVPN (65 aa)) constitute a propeptide, removed in mature form.

Contains 3 disulfide bonds. In terms of processing, this is a cyclic peptide.

Functionally, probably participates in a plant defense mechanism. This is Cliotide T12 from Clitoria ternatea (Butterfly pea).